The sequence spans 686 residues: Glycine--tRNA ligase beta subunit (686 aa).

It belongs to the class-II aminoacyl-tRNA synthetase family. Tetramer of two alpha and two beta subunits.

It is found in the cytoplasm. The catalysed reaction is tRNA(Gly) + glycine + ATP = glycyl-tRNA(Gly) + AMP + diphosphate. The polypeptide is Glycine--tRNA ligase beta subunit (Geobacter metallireducens (strain ATCC 53774 / DSM 7210 / GS-15)).